The sequence spans 317 residues: Probable pathogenesis-related protein CaO19.6200 (317 aa).

An N-terminal signal peptide occupies residues 1 to 23 (MKFLQSFPVILAVFSFAANLVSS). Disordered stretches follow at residues 52–116 (RLET…TTVT) and 155–179 (PSAP…DSQL). Over residues 58–76 (PTSTTTTIVIPSSKPSSPE) the composition is skewed to low complexity. 2 stretches are compositionally biased toward polar residues: residues 84-116 (QPMF…TTVT) and 168-179 (ENNSGTNDDSQL). Asn169 carries N-linked (GlcNAc...) asparagine glycosylation. Residues 187 to 297 (LEAHNIKRAS…GWGLYIICNY (111 aa)) form the SCP domain.

This sequence belongs to the CRISP family.

It is found in the secreted. Functionally, secreted protein that acts as a virulence factor during infections. The chain is Probable pathogenesis-related protein CaO19.6200 from Candida albicans (strain SC5314 / ATCC MYA-2876) (Yeast).